Consider the following 237-residue polypeptide: UPF0173 metal-dependent hydrolase BCAN_B0597 (237 aa).

It belongs to the UPF0173 family.

The chain is UPF0173 metal-dependent hydrolase BCAN_B0597 from Brucella canis (strain ATCC 23365 / NCTC 10854 / RM-666).